Reading from the N-terminus, the 488-residue chain is Replication-associated protein (488 aa).

The disordered stretch occupies residues 462 to 488; that stretch reads PRPRQMQRSATEHNLFQYARSGRDPTS.

The protein resides in the host nucleus. Its function is as follows. Plays an essential for the replication of viral DNA. Presumably cleaves viral genomic dsRNA replicative form to initiate rolling circle replication. This chain is Replication-associated protein, found in Chaetoceros diatodnavirus 1 (Chaetoceros setoense DNA virus).